We begin with the raw amino-acid sequence, 129 residues long: Large ribosomal subunit protein bL12c (129 aa).

The span at 101 to 123 (KPIKEGMSKADAEAGKKQLEEAG) shows a compositional bias: basic and acidic residues. Positions 101-129 (KPIKEGMSKADAEAGKKQLEEAGAKATLK) are disordered.

Belongs to the bacterial ribosomal protein bL12 family. In terms of assembly, homodimer. Part of the ribosomal stalk of the 50S ribosomal subunit. Forms a multimeric L10(L12)X complex, where L10 forms an elongated spine to which 2 to 4 L12 dimers bind in a sequential fashion. Binds GTP-bound translation factors.

The protein resides in the plastid. The protein localises to the chloroplast. Functionally, forms part of the ribosomal stalk which helps the ribosome interact with GTP-bound translation factors. Is thus essential for accurate translation. This chain is Large ribosomal subunit protein bL12c, found in Guillardia theta (Cryptophyte).